Consider the following 221-residue polypeptide: Urease accessory protein UreF (221 aa).

The protein belongs to the UreF family. As to quaternary structure, ureD, UreF and UreG form a complex that acts as a GTP-hydrolysis-dependent molecular chaperone, activating the urease apoprotein by helping to assemble the nickel containing metallocenter of UreC. The UreE protein probably delivers the nickel.

The protein localises to the cytoplasm. Required for maturation of urease via the functional incorporation of the urease nickel metallocenter. This Teredinibacter turnerae (strain ATCC 39867 / T7901) protein is Urease accessory protein UreF.